We begin with the raw amino-acid sequence, 482 residues long: Cysteine--tRNA ligase (482 aa).

Cys29 serves as a coordination point for Zn(2+). The short motif at 31 to 41 is the 'HIGH' region element; that stretch reads PTVYDSAHVGH. Zn(2+)-binding residues include Cys210, His235, and Glu239. Positions 272-276 match the 'KMSKS' region motif; it reads KMSKS. Lys275 provides a ligand contact to ATP.

Belongs to the class-I aminoacyl-tRNA synthetase family. In terms of assembly, monomer. Zn(2+) is required as a cofactor.

It localises to the cytoplasm. The catalysed reaction is tRNA(Cys) + L-cysteine + ATP = L-cysteinyl-tRNA(Cys) + AMP + diphosphate. The protein is Cysteine--tRNA ligase of Anaeromyxobacter sp. (strain Fw109-5).